The primary structure comprises 501 residues: Cytochrome P450 6j1 (501 aa).

Cys-444 provides a ligand contact to heme.

This sequence belongs to the cytochrome P450 family. Heme serves as cofactor.

The protein localises to the endoplasmic reticulum membrane. Its subcellular location is the microsome membrane. This is Cytochrome P450 6j1 (CYP6J1) from Blattella germanica (German cockroach).